A 116-amino-acid chain; its full sequence is Nucleoid-associated protein Tfu_0045 (116 aa).

This sequence belongs to the YbaB/EbfC family. Homodimer.

It localises to the cytoplasm. The protein localises to the nucleoid. Binds to DNA and alters its conformation. May be involved in regulation of gene expression, nucleoid organization and DNA protection. The sequence is that of Nucleoid-associated protein Tfu_0045 from Thermobifida fusca (strain YX).